The following is a 980-amino-acid chain: Chitin binding domain containing chtb-2 (980 aa).

The signal sequence occupies residues 1–20; that stretch reads MRTMHCFLFILLFCLGQVFT. 2 N-linked (GlcNAc...) asparagine glycosylation sites follow: Asn-187 and Asn-190. 3 disordered regions span residues 310–354, 431–451, and 486–512; these read ERQQ…AELD, QEEE…QIRQ, and EILR…QQEA. Residues Asn-941 and Asn-975 are each glycosylated (N-linked (GlcNAc...) asparagine).

The protein is Chitin binding domain containing chtb-2 of Caenorhabditis elegans.